The sequence spans 140 residues: Large ribosomal subunit protein uL14 (140 aa).

Belongs to the universal ribosomal protein uL14 family.

The polypeptide is Large ribosomal subunit protein uL14 (RPL23) (Brugia malayi (Filarial nematode worm)).